Consider the following 177-residue polypeptide: Chorismate pyruvate-lyase (177 aa).

Substrate-binding residues include Met-36, Arg-78, Leu-116, and Glu-157.

The protein belongs to the UbiC family. Monomer.

The protein localises to the cytoplasm. The catalysed reaction is chorismate = 4-hydroxybenzoate + pyruvate. It functions in the pathway cofactor biosynthesis; ubiquinone biosynthesis. Removes the pyruvyl group from chorismate, with concomitant aromatization of the ring, to provide 4-hydroxybenzoate (4HB) for the ubiquinone pathway. The sequence is that of Chorismate pyruvate-lyase from Pectobacterium carotovorum subsp. carotovorum (strain PC1).